A 307-amino-acid polypeptide reads, in one-letter code: Protoheme IX farnesyltransferase (307 aa).

8 consecutive transmembrane segments (helical) span residues 32 to 52, 65 to 85, 108 to 128, 131 to 151, 158 to 178, 186 to 206, 251 to 271, and 287 to 307; these read MGIVNSNTLTVFTGFWLALHF, FFTIVGSGLVMAGVCCLNNYI, PGFALTFGLVILLLGFVFLLL, PMAVLMGFIGAFTYVVLYSLW, LNTVVGSISGAVPPLIGWAAI, IAWMLFLIMFIWQIPHFLALA, LGITFMVIATLLNIGWIVLGF, and FVYSLNYLTILFVSMIVVTFF.

It belongs to the UbiA prenyltransferase family. Protoheme IX farnesyltransferase subfamily. As to quaternary structure, interacts with CtaA.

It localises to the cell membrane. The enzyme catalyses heme b + (2E,6E)-farnesyl diphosphate + H2O = Fe(II)-heme o + diphosphate. The protein operates within porphyrin-containing compound metabolism; heme O biosynthesis; heme O from protoheme: step 1/1. Converts heme B (protoheme IX) to heme O by substitution of the vinyl group on carbon 2 of heme B porphyrin ring with a hydroxyethyl farnesyl side group. This Bacillus cereus (strain G9842) protein is Protoheme IX farnesyltransferase.